The following is a 325-amino-acid chain: All-trans-nonaprenyl-diphosphate synthase (geranyl-diphosphate specific) (325 aa).

3 residues coordinate isopentenyl diphosphate: Lys-48, Arg-51, and His-81. Asp-88 and Asp-92 together coordinate Mg(2+). An an all-trans-polyprenyl diphosphate-binding site is contributed by Arg-97. Arg-98 contacts isopentenyl diphosphate. An all-trans-polyprenyl diphosphate contacts are provided by Lys-174, Thr-175, Gln-211, and Lys-228.

The protein belongs to the FPP/GGPP synthase family. Homodimer. Mg(2+) serves as cofactor.

The enzyme catalyses 7 isopentenyl diphosphate + (2E)-geranyl diphosphate = all-trans-nonaprenyl diphosphate + 7 diphosphate. Catalyzes the sequential condensation of isopentenyl diphosphate (IPP) with the allylic substrate to give solanesyl diphosphate. Could be important to determine the side chain length of ubiquinone. This is All-trans-nonaprenyl-diphosphate synthase (geranyl-diphosphate specific) (sdsA) from Rhodobacter capsulatus (Rhodopseudomonas capsulata).